Here is a 319-residue protein sequence, read N- to C-terminus: Zinc metalloproteinase/disintegrin (319 aa).

Positions 1 to 28 are excised as a propeptide; that stretch reads EDEAPKMCGVTQNWESYEPIKKASQSNL. Positions 34-230 constitute a Peptidase M12B domain; sequence RYIELVIVAD…QKPQCILNKP (197 aa). The Ca(2+) site is built by E37 and D121. Intrachain disulfides connect C145–C225, C185–C209, and C187–C192. Position 170 (H170) interacts with Zn(2+). The active site involves E171. 2 residues coordinate Zn(2+): H174 and H180. Ca(2+) contacts are provided by C225 and N228. Positions 231–246 are excised as a propeptide; the sequence is LRTDTVSTPVSGNELL. One can recognise a Disintegrin domain in the interval 238 to 319; that stretch reads TPVSGNELLE…AGCPRNPFHA (82 aa). Cystine bridges form between C252/C267, C254/C262, C261/C284, C275/C281, C280/C305, and C293/C312. Residues 297–299 carry the Cell attachment site motif; that stretch reads RGD.

It belongs to the venom metalloproteinase (M12B) family. P-II subfamily. P-IIa sub-subfamily. In terms of assembly, monomer. The cofactor is Zn(2+). As to expression, expressed by the venom gland.

It localises to the secreted. With respect to regulation, excess of calcium ions significantly suppress the autoproteolysis of the enzyme. Functionally, metalloproteinase that impairs hemostasis in the envenomed animal. Shows autoproteolysis dependent on pH and temperature. Does not show hemorrhagic activity. Inhibits platelet aggregation induced by ADP (IC(50) is 200 nM), collagen (IC(50) is 500 nM), thrombin and epinephrin (IC(50) is 300 nM). Does not inhibit aggregation induced by ristocetin. Its function is as follows. Inhibits platelet aggregation induced by ADP (IC(50) is 100 nM), collagen (IC(50) is 500 nM), thrombin and epinephrin (IC(50) is 300 nM). Does not inhibit aggregation induced by ristocetin. Significantly inhibits angiogenesis both in vivo and in vitro. This Gloydius brevicauda (Korean slamosa snake) protein is Zinc metalloproteinase/disintegrin.